Here is a 407-residue protein sequence, read N- to C-terminus: 45 kDa calcium-binding protein (407 aa).

The signal sequence occupies residues 1 to 35; it reads MVWSWVAMASRWGPLVGLAPRCLWLLGAVLLMDAS. N40 carries N-linked (GlcNAc...) asparagine glycosylation. 2 EF-hand domains span residues 98 to 133 and 137 to 172; these read RSRR…KTAE and EAME…SKGH. S99 bears the Phosphoserine mark. D111, N113, D115, K117, E122, D150, D152, D154, H156, and E161 together coordinate Ca(2+). A phosphothreonine mark is found at T193 and T217. Positions 249 to 259 are enriched in low complexity; sequence GSSLAGAPGPG. Positions 249 to 282 are disordered; it reads GSSLAGAPGPGDQRQGPGIAGKSGKVLREPQPGC. Residues D291, D293, D295, Q297, and E302 each coordinate Ca(2+). EF-hand domains lie at 291–313, 323–358, and 359–394; these read DQDG…TVEN, WVKD…MNEY, and NALN…FTGS. T310 is subject to Phosphothreonine. Positions 336, 338, and 340 each coordinate Ca(2+). T344 is modified (phosphothreonine). 6 residues coordinate Ca(2+): E347, D372, N374, N376, H378, and E383. The tract at residues 354 to 407 is necessary for intracellular retention in Golgi apparatus lumen; it reads PMNEYNALNEAKQMIAVADENQNHHLEPEEVLKYSEFFTGSKLVDYARSVHEEF.

This sequence belongs to the CREC family.

It localises to the golgi apparatus lumen. Its function is as follows. May regulate calcium-dependent activities in the endoplasmic reticulum lumen or post-ER compartment. The chain is 45 kDa calcium-binding protein (SDF4) from Macaca fascicularis (Crab-eating macaque).